The sequence spans 452 residues: Bifunctional protein GlmU (452 aa).

The segment at 1–232 is pyrophosphorylase; sequence MTTRTSLTIV…EDEVRGINTK (232 aa). UDP-N-acetyl-alpha-D-glucosamine contacts are provided by residues 11–14, Lys-25, Gln-78, and 83–84; these read LAAG and GT. Residue Asp-108 coordinates Mg(2+). The UDP-N-acetyl-alpha-D-glucosamine site is built by Gly-144, Glu-158, Asn-173, and Asn-230. A Mg(2+)-binding site is contributed by Asn-230. Residues 233–253 are linker; it reads AQLAEAEAVMQTRLRQAAMTA. The segment at 254–452 is N-acetyltransferase; that stretch reads GVTLISPETI…SARARKPKTS (199 aa). The UDP-N-acetyl-alpha-D-glucosamine site is built by Arg-319 and Lys-337. His-349 (proton acceptor) is an active-site residue. Residues Tyr-352 and Asn-363 each coordinate UDP-N-acetyl-alpha-D-glucosamine. Acetyl-CoA is bound by residues Ala-366, 372-373, Ser-391, Ser-409, and Arg-426; that span reads NY.

This sequence in the N-terminal section; belongs to the N-acetylglucosamine-1-phosphate uridyltransferase family. It in the C-terminal section; belongs to the transferase hexapeptide repeat family. In terms of assembly, homotrimer. It depends on Mg(2+) as a cofactor.

It localises to the cytoplasm. It carries out the reaction alpha-D-glucosamine 1-phosphate + acetyl-CoA = N-acetyl-alpha-D-glucosamine 1-phosphate + CoA + H(+). The enzyme catalyses N-acetyl-alpha-D-glucosamine 1-phosphate + UTP + H(+) = UDP-N-acetyl-alpha-D-glucosamine + diphosphate. It participates in nucleotide-sugar biosynthesis; UDP-N-acetyl-alpha-D-glucosamine biosynthesis; N-acetyl-alpha-D-glucosamine 1-phosphate from alpha-D-glucosamine 6-phosphate (route II): step 2/2. Its pathway is nucleotide-sugar biosynthesis; UDP-N-acetyl-alpha-D-glucosamine biosynthesis; UDP-N-acetyl-alpha-D-glucosamine from N-acetyl-alpha-D-glucosamine 1-phosphate: step 1/1. The protein operates within bacterial outer membrane biogenesis; LPS lipid A biosynthesis. Functionally, catalyzes the last two sequential reactions in the de novo biosynthetic pathway for UDP-N-acetylglucosamine (UDP-GlcNAc). The C-terminal domain catalyzes the transfer of acetyl group from acetyl coenzyme A to glucosamine-1-phosphate (GlcN-1-P) to produce N-acetylglucosamine-1-phosphate (GlcNAc-1-P), which is converted into UDP-GlcNAc by the transfer of uridine 5-monophosphate (from uridine 5-triphosphate), a reaction catalyzed by the N-terminal domain. In Rhodopseudomonas palustris (strain BisB5), this protein is Bifunctional protein GlmU.